The sequence spans 100 residues: uncharacterized protein (100 aa).

This is an uncharacterized protein from Acidianus filamentous virus 2 (isolate Italy/Pozzuoli) (AFV-2).